We begin with the raw amino-acid sequence, 147 residues long: D-aminoacyl-tRNA deacylase (147 aa).

A Gly-cisPro motif, important for rejection of L-amino acids motif is present at residues 137-138 (GP).

This sequence belongs to the DTD family. In terms of assembly, homodimer.

The protein localises to the cytoplasm. The enzyme catalyses glycyl-tRNA(Ala) + H2O = tRNA(Ala) + glycine + H(+). It catalyses the reaction a D-aminoacyl-tRNA + H2O = a tRNA + a D-alpha-amino acid + H(+). An aminoacyl-tRNA editing enzyme that deacylates mischarged D-aminoacyl-tRNAs. Also deacylates mischarged glycyl-tRNA(Ala), protecting cells against glycine mischarging by AlaRS. Acts via tRNA-based rather than protein-based catalysis; rejects L-amino acids rather than detecting D-amino acids in the active site. By recycling D-aminoacyl-tRNA to D-amino acids and free tRNA molecules, this enzyme counteracts the toxicity associated with the formation of D-aminoacyl-tRNA entities in vivo and helps enforce protein L-homochirality. The chain is D-aminoacyl-tRNA deacylase from Acinetobacter baumannii (strain AYE).